The primary structure comprises 143 residues: Large ribosomal subunit protein uL15 (143 aa).

Composition is skewed to basic residues over residues 1 to 13 (MIRK…KMRG) and 23 to 38 (KKHR…GNAG). The disordered stretch occupies residues 1–38 (MIRKSKKITKMRGSRTCGYGEAKKHRGAGHRGGRGNAG).

It belongs to the universal ribosomal protein uL15 family. As to quaternary structure, part of the 50S ribosomal subunit.

Binds to the 23S rRNA. The polypeptide is Large ribosomal subunit protein uL15 (Methanococcus maripaludis (strain C5 / ATCC BAA-1333)).